We begin with the raw amino-acid sequence, 507 residues long: Carboxypeptidase sxa2 (507 aa).

The signal sequence occupies residues 1–22 (MLSLFLKSLFAIIIIELTIIHA). 2 N-linked (GlcNAc...) asparagine glycosylation sites follow: Asn38 and Asn45. A disordered region spans residues 41–64 (SASSNQTVQPRQHAAPSSDRIKSL). The active site involves Ser200. Asn259, Asn260, and Asn300 each carry an N-linked (GlcNAc...) asparagine glycan. Asp434 is a catalytic residue. An N-linked (GlcNAc...) asparagine glycan is attached at Asn448. His487 is an active-site residue.

This sequence belongs to the peptidase S10 family.

It localises to the secreted. In terms of biological role, involved in degradation or processing of the mating pheromones. Its loss causes a persistent response to the pheromones. It may be required for stabilization of enzymes that are essential for zygote formation. May degrade the mating pheromone P-factor. This Schizosaccharomyces pombe (strain 972 / ATCC 24843) (Fission yeast) protein is Carboxypeptidase sxa2 (sxa2).